The sequence spans 310 residues: tRNA pseudouridine synthase B (310 aa).

The active-site Nucleophile is the Asp-37.

It belongs to the pseudouridine synthase TruB family. Type 1 subfamily.

The enzyme catalyses uridine(55) in tRNA = pseudouridine(55) in tRNA. Its function is as follows. Responsible for synthesis of pseudouridine from uracil-55 in the psi GC loop of transfer RNAs. In Deinococcus deserti (strain DSM 17065 / CIP 109153 / LMG 22923 / VCD115), this protein is tRNA pseudouridine synthase B.